Reading from the N-terminus, the 663-residue chain is LEAF RUST 10 DISEASE-RESISTANCE LOCUS RECEPTOR-LIKE PROTEIN KINASE-like 1.4 (663 aa).

Residues 1-25 (MYYPLSSSLMFFILFSLFYHLPCES) form the signal peptide. Topologically, residues 26–241 (SKCESLFQCG…TSLSIGAKAG (216 aa)) are extracellular. Residues Asn36, Asn64, Asn106, Asn137, and Asn208 are each glycosylated (N-linked (GlcNAc...) asparagine). A helical membrane pass occupies residues 242–262 (IAVASVSGLAILLLAGLFLCI). Residues 263–663 (RRRRKTQDAQ…TSSSDTAASL (401 aa)) lie on the Cytoplasmic side of the membrane. Residues 282–304 (SYSSRDTSRNPTSTTISSSSNHS) are disordered. Residues 290 to 304 (RNPTSTTISSSSNHS) show a composition bias toward low complexity. One can recognise a Protein kinase domain in the interval 334–609 (ENFSRELGDG…DEIVEILRGI (276 aa)). Residues 340–348 (LGDGGFGTV) and Lys362 each bind ATP. The active-site Proton acceptor is Asp458. The interval 637–663 (LLRNSVPPPISPETDKWTSSSDTAASL) is disordered. Residues 653–663 (WTSSSDTAASL) are compositionally biased toward polar residues.

It belongs to the protein kinase superfamily. Ser/Thr protein kinase family.

It localises to the cell membrane. It carries out the reaction L-seryl-[protein] + ATP = O-phospho-L-seryl-[protein] + ADP + H(+). The enzyme catalyses L-threonyl-[protein] + ATP = O-phospho-L-threonyl-[protein] + ADP + H(+). The protein is LEAF RUST 10 DISEASE-RESISTANCE LOCUS RECEPTOR-LIKE PROTEIN KINASE-like 1.4 of Arabidopsis thaliana (Mouse-ear cress).